Here is a 164-residue protein sequence, read N- to C-terminus: Interferon gamma (164 aa).

The N-terminal stretch at methionine 1–glycine 19 is a signal peptide. N-linked (GlcNAc...) asparagine glycans are attached at residues asparagine 42 and asparagine 61.

The protein belongs to the type II (or gamma) interferon family. In terms of assembly, homodimer.

The protein localises to the secreted. Functionally, produced by lymphocytes activated by specific antigens or mitogens. IFN-gamma, in addition to having antiviral activity, has important immunoregulatory functions. It is a potent activator of macrophages, it has antiproliferative effects on transformed cells and it can potentiate the antiviral and antitumor effects of the type I interferons. The protein is Interferon gamma (IFNG) of Numida meleagris (Helmeted guineafowl).